Reading from the N-terminus, the 317-residue chain is ADIPOR-like receptor IZH1 (317 aa).

Residues 1–80 (MSEERGMKEQ…FNNESINIYT (80 aa)) are Lumenal-facing. An N-linked (GlcNAc...) asparagine glycan is attached at asparagine 73. The helical transmembrane segment at 81 to 101 (HLIPGVAYLVLFLIFADLVLA) threads the bilayer. The Cytoplasmic segment spans residues 102–113 (QLLPGLDAGEHR). The chain crosses the membrane as a helical span at residues 114–136 (MLRFYLLGAFTCLACSSCFHCLK). The Lumenal segment spans residues 137–148 (QHSEPHSRLWSK). A helical transmembrane segment spans residues 149-169 (VDYLGILAQITCSTISLLYYG). Residues 170–175 (YHSYPS) lie on the Cytoplasmic side of the membrane. Residues 176–196 (HFVFFSTLTVALCSACAVLVL) form a helical membrane-spanning segment. Asparagine 197 is a glycosylation site (N-linked (GlcNAc...) asparagine). Residues 197–210 (NDSFNTVAFRPLRA) lie on the Lumenal side of the membrane. Residues 211–231 (FLFMAFGLSGVIPVLAGSYQF) form a helical membrane-spanning segment. At 232–243 (GFAEWAARIQLK) the chain is on the cytoplasmic side. A helical membrane pass occupies residues 244 to 264 (YVLYEAVFYITGALVYGFRIP). Over 265–283 (ERFAPGKFDMVGHSHQIFH) the chain is Lumenal. The helical transmembrane segment at 284-304 (LLVVLGTLCHFRAVTGSYIFI) threads the bilayer. The Cytoplasmic portion of the chain corresponds to 305–317 (CTGKHYSSLLMFI).

It belongs to the ADIPOR family.

Its subcellular location is the endoplasmic reticulum membrane. Functionally, ADIPOR-like receptor involved in zinc metabolism either by altering membrane sterol content or by directly altering cellular zinc levels. The polypeptide is ADIPOR-like receptor IZH1 (IZH1) (Eremothecium gossypii (strain ATCC 10895 / CBS 109.51 / FGSC 9923 / NRRL Y-1056) (Yeast)).